A 428-amino-acid chain; its full sequence is Cholecystokinin receptor type A (428 aa).

Topologically, residues 1–41 are extracellular; it reads MEVADSLLGNGSDVPPPCELGLENETLVCLEQPRAAKEWQP. N-linked (GlcNAc...) asparagine glycans are attached at residues Asn-10 and Asn-24. A disulfide bond links Cys-18 and Cys-29. The chain crosses the membrane as a helical span at residues 42-67; the sequence is AVQILLYSLIFLLSVLGNTLVITVLI. The Cytoplasmic portion of the chain corresponds to 68–77; it reads RNKRMRTVTN. Residues 78–104 traverse the membrane as a helical segment; it reads IFLLSLAVSDLMLCLFCMPFNLIPNLL. Over 105-115 the chain is Extracellular; the sequence is KDFIFGSAVCK. Cys-114 and Cys-196 are oxidised to a cystine. A helical membrane pass occupies residues 116 to 137; that stretch reads TTTYFMGTSVSVSTFNLVAISL. Topologically, residues 138-157 are cytoplasmic; the sequence is ERYGAICKPLQSRVWQTKSH. Residues 158–178 traverse the membrane as a helical segment; that stretch reads ALKVIATTWCLSFTIMTPYPI. The Extracellular segment spans residues 179-210; sequence YSNLVPFTKTNNQTANMCRFLLPNDVMQQSWH. N-linked (GlcNAc...) asparagine glycosylation occurs at Asn-190. A helical transmembrane segment spans residues 211–234; sequence TFLLLILFLIPGIVMMVAYGLISL. Residues 235–313 lie on the Cytoplasmic side of the membrane; that stretch reads ELYQGIKFDA…NLMAKKRVIR (79 aa). A disordered region spans residues 250–269; the sequence is ARDRNPSTGSSGRYEDGDGC. A helical membrane pass occupies residues 314 to 334; the sequence is MLMVIVVLFFLCWMPIFSANA. The Extracellular portion of the chain corresponds to 335–349; sequence WRAYDTASAERRLSG. A helical membrane pass occupies residues 350–373; sequence TPISFILLLSYTSSCVNPIIYCFM. Residues 374–428 lie on the Cytoplasmic side of the membrane; it reads NKRFRLGFLATFPCCPHPGPPGPRGEVGEEEEGRTTGASLSRYSYSHMSASAPGP. The S-palmitoyl cysteine moiety is linked to residue Cys-387. The interval 393-428 is disordered; sequence PPGPRGEVGEEEEGRTTGASLSRYSYSHMSASAPGP. Residues 409–422 show a composition bias toward polar residues; it reads TGASLSRYSYSHMS.

This sequence belongs to the G-protein coupled receptor 1 family.

Its subcellular location is the cell membrane. Receptor for cholecystokinin. Mediates pancreatic growth and enzyme secretion, smooth muscle contraction of the gall bladder and stomach. Has a 1000-fold higher affinity for CCK rather than for gastrin. It modulates feeding and dopamine-induced behavior in the central and peripheral nervous system. This receptor mediates its action by association with G proteins that activate a phosphatidylinositol-calcium second messenger system. This Canis lupus familiaris (Dog) protein is Cholecystokinin receptor type A (CCKAR).